The primary structure comprises 218 residues: GTP cyclohydrolase 1 (218 aa).

3 residues coordinate Zn(2+): Cys-107, His-110, and Cys-178.

Belongs to the GTP cyclohydrolase I family. In terms of assembly, homomer.

The enzyme catalyses GTP + H2O = 7,8-dihydroneopterin 3'-triphosphate + formate + H(+). Its pathway is cofactor biosynthesis; 7,8-dihydroneopterin triphosphate biosynthesis; 7,8-dihydroneopterin triphosphate from GTP: step 1/1. In Azorhizobium caulinodans (strain ATCC 43989 / DSM 5975 / JCM 20966 / LMG 6465 / NBRC 14845 / NCIMB 13405 / ORS 571), this protein is GTP cyclohydrolase 1.